The following is a 359-amino-acid chain: 3-dehydroquinate synthase (359 aa).

NAD(+)-binding positions include 72 to 77, 106 to 110, 130 to 131, K143, K152, and 170 to 173; these read EGEIHK, GVIGD, TS, and CLKT. Positions 185, 248, and 264 each coordinate Zn(2+).

Belongs to the sugar phosphate cyclases superfamily. Dehydroquinate synthase family. It depends on Co(2+) as a cofactor. Zn(2+) serves as cofactor. Requires NAD(+) as cofactor.

The protein resides in the cytoplasm. It carries out the reaction 7-phospho-2-dehydro-3-deoxy-D-arabino-heptonate = 3-dehydroquinate + phosphate. The protein operates within metabolic intermediate biosynthesis; chorismate biosynthesis; chorismate from D-erythrose 4-phosphate and phosphoenolpyruvate: step 2/7. Functionally, catalyzes the conversion of 3-deoxy-D-arabino-heptulosonate 7-phosphate (DAHP) to dehydroquinate (DHQ). In Dehalococcoides mccartyi (strain ATCC BAA-2100 / JCM 16839 / KCTC 5957 / BAV1), this protein is 3-dehydroquinate synthase.